A 589-amino-acid polypeptide reads, in one-letter code: Putative ABC transporter ATP-binding protein MG015 (589 aa).

A run of 6 helical transmembrane segments spans residues 9–29 (LLYV…NPIL), 66–86 (LTIV…FNVA), 161–181 (LIFL…ATLI), 251–271 (IFLF…SISI), 280–300 (IPSF…IASL), and 303–323 (ITLA…GVVS). In terms of domain architecture, ABC transmembrane type-1 spans 9 to 319 (LLYVFLCIVL…IFTLWNLVQL (311 aa)). The ABC transporter domain maps to 352–586 (IRFENVAFGY…NGFYARLKQS (235 aa)). 385-392 (GPTGAGKS) contributes to the ATP binding site.

Belongs to the ABC transporter superfamily.

It localises to the cell membrane. The polypeptide is Putative ABC transporter ATP-binding protein MG015 (Mycoplasma genitalium (strain ATCC 33530 / DSM 19775 / NCTC 10195 / G37) (Mycoplasmoides genitalium)).